Reading from the N-terminus, the 89-residue chain is Small ribosomal subunit protein uS15 (89 aa).

This sequence belongs to the universal ribosomal protein uS15 family. As to quaternary structure, part of the 30S ribosomal subunit. Forms a bridge to the 50S subunit in the 70S ribosome, contacting the 23S rRNA.

One of the primary rRNA binding proteins, it binds directly to 16S rRNA where it helps nucleate assembly of the platform of the 30S subunit by binding and bridging several RNA helices of the 16S rRNA. Functionally, forms an intersubunit bridge (bridge B4) with the 23S rRNA of the 50S subunit in the ribosome. The chain is Small ribosomal subunit protein uS15 from Streptococcus thermophilus (strain CNRZ 1066).